Reading from the N-terminus, the 120-residue chain is uncharacterized protein (120 aa).

2 helical membrane-spanning segments follow: residues 8–28 (PFVTGVLLPSAVFSFLFCTLV) and 55–75 (FLENTLIFLGSGNLTAHIGIL).

The protein localises to the membrane. This is an uncharacterized protein from Saccharomyces cerevisiae (strain ATCC 204508 / S288c) (Baker's yeast).